We begin with the raw amino-acid sequence, 289 residues long: tRNA U34 carboxymethyltransferase (289 aa).

Residues lysine 60, tryptophan 74, lysine 79, glycine 98, 120-122 (DPS), 147-148 (VE), tyrosine 167, and arginine 282 contribute to the carboxy-S-adenosyl-L-methionine site.

The protein belongs to the class I-like SAM-binding methyltransferase superfamily. CmoB family. In terms of assembly, homotetramer.

It catalyses the reaction carboxy-S-adenosyl-L-methionine + 5-hydroxyuridine(34) in tRNA = 5-carboxymethoxyuridine(34) in tRNA + S-adenosyl-L-homocysteine + H(+). Its function is as follows. Catalyzes carboxymethyl transfer from carboxy-S-adenosyl-L-methionine (Cx-SAM) to 5-hydroxyuridine (ho5U) to form 5-carboxymethoxyuridine (cmo5U) at position 34 in tRNAs. The sequence is that of tRNA U34 carboxymethyltransferase from Campylobacter concisus (strain 13826).